A 168-amino-acid chain; its full sequence is G/U mismatch-specific DNA glycosylase (168 aa).

The protein belongs to the uracil-DNA glycosylase (UDG) superfamily. TDG/mug family. In terms of assembly, binds DNA as a monomer.

It localises to the cytoplasm. The catalysed reaction is Specifically hydrolyzes mismatched double-stranded DNA and polynucleotides, releasing free uracil.. Excises ethenocytosine and uracil, which can arise by alkylation or deamination of cytosine, respectively, from the corresponding mispairs with guanine in ds-DNA. It is capable of hydrolyzing the carbon-nitrogen bond between the sugar-phosphate backbone of the DNA and the mispaired base. The complementary strand guanine functions in substrate recognition. Required for DNA damage lesion repair in stationary-phase cells. This Klebsiella pneumoniae subsp. pneumoniae (strain ATCC 700721 / MGH 78578) protein is G/U mismatch-specific DNA glycosylase.